A 326-amino-acid polypeptide reads, in one-letter code: N-acetyl-gamma-glutamyl-phosphate reductase (326 aa).

The active site involves Cys-155.

Belongs to the NAGSA dehydrogenase family. Type 1 subfamily.

It localises to the cytoplasm. It catalyses the reaction N-acetyl-L-glutamate 5-semialdehyde + phosphate + NADP(+) = N-acetyl-L-glutamyl 5-phosphate + NADPH + H(+). It functions in the pathway amino-acid biosynthesis; L-arginine biosynthesis; N(2)-acetyl-L-ornithine from L-glutamate: step 3/4. Its function is as follows. Catalyzes the NADPH-dependent reduction of N-acetyl-5-glutamyl phosphate to yield N-acetyl-L-glutamate 5-semialdehyde. The protein is N-acetyl-gamma-glutamyl-phosphate reductase of Shewanella denitrificans (strain OS217 / ATCC BAA-1090 / DSM 15013).